A 317-amino-acid chain; its full sequence is 3-oxoacyl-[acyl-carrier-protein] reductase 5, chloroplastic (317 aa).

The transit peptide at 1-57 (TTVAATKLTSLKATAGKLGYREICQVRQWAPLKSAMPHFGMLRCATSTVVKAQAQAQ) directs the protein to the chloroplast. 79-103 (VTGASRGIGKAIALSLGKAGCKVLV) contacts NADP(+). Ser211 is a substrate binding site. Tyr224 serves as the catalytic Proton acceptor.

This sequence belongs to the short-chain dehydrogenases/reductases (SDR) family. Homotetramer.

The protein resides in the plastid. It localises to the chloroplast. It carries out the reaction a (3R)-hydroxyacyl-[ACP] + NADP(+) = a 3-oxoacyl-[ACP] + NADPH + H(+). The protein operates within lipid metabolism; fatty acid biosynthesis. The sequence is that of 3-oxoacyl-[acyl-carrier-protein] reductase 5, chloroplastic (bkr1) from Brassica napus (Rape).